The primary structure comprises 151 residues: Deazaflavin-dependent nitroreductase (151 aa).

Residues 54–56 (RKT), 60–65 (RVNPLY), 76–79 (AASK), 87–91 (MWYLN), and tyrosine 133 each bind coenzyme F420-(gamma-Glu)n.

Belongs to the F420H(2)-dependent quinone reductase family.

The protein resides in the cell membrane. It carries out the reaction oxidized coenzyme F420-(gamma-L-Glu)(n) + a quinol + H(+) = reduced coenzyme F420-(gamma-L-Glu)(n) + a quinone. Involved in a F420-dependent anti-oxidant mechanism that protects M.tuberculosis against oxidative stress and bactericidal agents. Catalyzes the F420H(2)-dependent two-electron reduction of quinones to dihydroquinones, thereby preventing the formation of cytotoxic semiquinones obtained by the one-electron reduction pathway. In vitro, catalyzes the reduction of both benzoquinone and naphthoquinone analogs; since menaquinone is the sole quinone electron carrier in the respiratory chain in M.tuberculosis, the physiological electron acceptor for Fqr-mediated F420H(2) oxidation is therefore likely to be the endogenous menaquinone found in the membrane fraction of M.tuberculosis. Is able to use F420 species with two and five glutamate residues in its polyglutamate tail. Cannot use NADH or NADPH instead of F420H(2) as the electron donor. Functionally, is involved in the bioreductive activation of bicyclic 4-nitroimidazole prodrugs such as PA-824 and delamanid developed for anti-tuberculosis therapy against both replicating and persistent bacteria. It converts PA-824 into three primary metabolites resulting from reduction of the imidazole ring at C-3; the major one is the corresponding des-nitroimidazole that generates lethal reactive nitrogen species, including nitric oxide (NO), which appears to be responsible for the anaerobic killing activity. Ddn uses the reduced F420 produced by FGD1 to activate PA-824. Delamanid (OPC-67683) is also reduced by Ddn to its des-nitro form. This chain is Deazaflavin-dependent nitroreductase (ddn), found in Mycobacterium tuberculosis (strain CDC 1551 / Oshkosh).